A 237-amino-acid chain; its full sequence is Aspartate/glutamate leucyltransferase (237 aa).

Belongs to the R-transferase family. Bpt subfamily.

Its subcellular location is the cytoplasm. The enzyme catalyses N-terminal L-glutamyl-[protein] + L-leucyl-tRNA(Leu) = N-terminal L-leucyl-L-glutamyl-[protein] + tRNA(Leu) + H(+). It catalyses the reaction N-terminal L-aspartyl-[protein] + L-leucyl-tRNA(Leu) = N-terminal L-leucyl-L-aspartyl-[protein] + tRNA(Leu) + H(+). Functionally, functions in the N-end rule pathway of protein degradation where it conjugates Leu from its aminoacyl-tRNA to the N-termini of proteins containing an N-terminal aspartate or glutamate. The chain is Aspartate/glutamate leucyltransferase from Marinobacter nauticus (strain ATCC 700491 / DSM 11845 / VT8) (Marinobacter aquaeolei).